A 486-amino-acid polypeptide reads, in one-letter code: Adenosylhomocysteinase (486 aa).

Substrate-binding residues include T63, D147, and E209. 210–212 is an NAD(+) binding site; sequence TTT. 2 residues coordinate substrate: K239 and D243. NAD(+)-binding positions include N244, 273–278, E296, N331, 352–354, and N400; these read GYGDVG and IGH.

It belongs to the adenosylhomocysteinase family. NAD(+) is required as a cofactor.

It carries out the reaction S-adenosyl-L-homocysteine + H2O = L-homocysteine + adenosine. It functions in the pathway amino-acid biosynthesis; L-homocysteine biosynthesis; L-homocysteine from S-adenosyl-L-homocysteine: step 1/1. Adenosylhomocysteine is a competitive inhibitor of S-adenosyl-L-methionine-dependent methyl transferase reactions; therefore adenosylhomocysteinase may play a key role in the control of methylations via regulation of the intracellular concentration of adenosylhomocysteine. The polypeptide is Adenosylhomocysteinase (Trichomonas vaginalis).